The primary structure comprises 122 residues: Large ribosomal subunit protein eL18 (122 aa).

It belongs to the eukaryotic ribosomal protein eL18 family.

This chain is Large ribosomal subunit protein eL18, found in Thermoplasma volcanium (strain ATCC 51530 / DSM 4299 / JCM 9571 / NBRC 15438 / GSS1).